The following is a 229-amino-acid chain: Potassium/proton antiporter CemA (229 aa).

A run of 3 helical transmembrane segments spans residues 7-27 (FLPL…SLSF), 106-126 (MILH…YSIL), and 189-209 (IISG…KYWI).

Belongs to the CemA family.

It localises to the plastid. The protein localises to the chloroplast inner membrane. It carries out the reaction K(+)(in) + H(+)(out) = K(+)(out) + H(+)(in). In terms of biological role, contributes to K(+)/H(+) antiport activity by supporting proton efflux to control proton extrusion and homeostasis in chloroplasts in a light-dependent manner to modulate photosynthesis. Prevents excessive induction of non-photochemical quenching (NPQ) under continuous-light conditions. Indirectly promotes efficient inorganic carbon uptake into chloroplasts. The polypeptide is Potassium/proton antiporter CemA (Eucalyptus globulus subsp. globulus (Tasmanian blue gum)).